The sequence spans 206 residues: RNA-binding protein (206 aa).

Residues 87–206 form a disordered region; it reads PRGMQRGNRR…SGAKSKRRPR (120 aa). A compositionally biased stretch (basic and acidic residues) spans 109 to 132; sequence MPKDDSNDRKKAKTSKDRKVEKSS.

Belongs to the phytoreovirus RNA-binding protein family.

It is found in the host cytoplasm. Functionally, constituent of viral factories. Binds to ssRNA and dsRNA. This is RNA-binding protein from Rice gall dwarf virus (RGDV).